Here is a 316-residue protein sequence, read N- to C-terminus: Putative phosphoribosylaminoimidazole-succinocarboxamide synthase 2 (316 aa).

Belongs to the SAICAR synthetase family.

It catalyses the reaction 5-amino-1-(5-phospho-D-ribosyl)imidazole-4-carboxylate + L-aspartate + ATP = (2S)-2-[5-amino-1-(5-phospho-beta-D-ribosyl)imidazole-4-carboxamido]succinate + ADP + phosphate + 2 H(+). It participates in purine metabolism; IMP biosynthesis via de novo pathway; 5-amino-1-(5-phospho-D-ribosyl)imidazole-4-carboxamide from 5-amino-1-(5-phospho-D-ribosyl)imidazole-4-carboxylate: step 1/2. This chain is Putative phosphoribosylaminoimidazole-succinocarboxamide synthase 2 (purC2), found in Agrobacterium fabrum (strain C58 / ATCC 33970) (Agrobacterium tumefaciens (strain C58)).